The sequence spans 259 residues: Protoheme IX farnesyltransferase (259 aa).

8 helical membrane-spanning segments follow: residues 15 to 35, 61 to 81, 83 to 103, 109 to 129, 137 to 157, 182 to 202, 208 to 228, and 236 to 256; these read LICL…NGVL, ATVA…TFLP, LTTA…TLWF, WGVV…ASAV, PLIL…ALAL, VCIF…WFTG, FAIE…LYLV, and AFQA…IDIC.

Belongs to the UbiA prenyltransferase family. Protoheme IX farnesyltransferase subfamily.

Its subcellular location is the cell inner membrane. It carries out the reaction heme b + (2E,6E)-farnesyl diphosphate + H2O = Fe(II)-heme o + diphosphate. Its pathway is porphyrin-containing compound metabolism; heme O biosynthesis; heme O from protoheme: step 1/1. Functionally, converts heme B (protoheme IX) to heme O by substitution of the vinyl group on carbon 2 of heme B porphyrin ring with a hydroxyethyl farnesyl side group. This is Protoheme IX farnesyltransferase from Geotalea uraniireducens (strain Rf4) (Geobacter uraniireducens).